A 334-amino-acid chain; its full sequence is Aspartate carbamoyltransferase catalytic subunit (334 aa).

The carbamoyl phosphate site is built by R71 and T72. An L-aspartate-binding site is contributed by K99. Residues R121, H151, and Q154 each contribute to the carbamoyl phosphate site. Residues R184 and R239 each contribute to the L-aspartate site. Carbamoyl phosphate is bound by residues G280 and P281.

This sequence belongs to the aspartate/ornithine carbamoyltransferase superfamily. ATCase family. In terms of assembly, heterododecamer (2C3:3R2) of six catalytic PyrB chains organized as two trimers (C3), and six regulatory PyrI chains organized as three dimers (R2).

The catalysed reaction is carbamoyl phosphate + L-aspartate = N-carbamoyl-L-aspartate + phosphate + H(+). It participates in pyrimidine metabolism; UMP biosynthesis via de novo pathway; (S)-dihydroorotate from bicarbonate: step 2/3. Catalyzes the condensation of carbamoyl phosphate and aspartate to form carbamoyl aspartate and inorganic phosphate, the committed step in the de novo pyrimidine nucleotide biosynthesis pathway. The protein is Aspartate carbamoyltransferase catalytic subunit of Pseudomonas fluorescens biotype A.